The following is a 138-amino-acid chain: Putative pre-16S rRNA nuclease (138 aa).

This sequence belongs to the YqgF nuclease family.

Its subcellular location is the cytoplasm. Could be a nuclease involved in processing of the 5'-end of pre-16S rRNA. This chain is Putative pre-16S rRNA nuclease, found in Salmonella typhimurium (strain LT2 / SGSC1412 / ATCC 700720).